Reading from the N-terminus, the 310-residue chain is Glutaminase 1 (310 aa).

Positions 66, 117, 161, 168, 192, 244, and 262 each coordinate substrate. At K294 the chain carries N6-acetyllysine.

This sequence belongs to the glutaminase family. Homotetramer.

It carries out the reaction L-glutamine + H2O = L-glutamate + NH4(+). This is Glutaminase 1 from Shigella flexneri.